We begin with the raw amino-acid sequence, 553 residues long: Serine protease 53 (553 aa).

The signal sequence occupies residues 1 to 23 (MKWCWGPVLLIAGATVLMEGLQA). Peptidase S1 domains follow at residues 24–273 (AQRA…ARVQ) and 294–526 (VACG…SLDW). Residues 27–46 (ACGQRGPGPPKPQEGNTVPG) form a disordered region. An intrachain disulfide couples cysteine 62 to cysteine 78. Catalysis depends on charge relay system residues histidine 77 and aspartate 128. Intrachain disulfides connect cysteine 158-cysteine 230, cysteine 187-cysteine 209, cysteine 220-cysteine 249, and cysteine 326-cysteine 342. Active-site charge relay system residues include serine 224, histidine 341, and aspartate 382. 2 cysteine pairs are disulfide-bonded: cysteine 444/cysteine 464 and cysteine 474/cysteine 502. Serine 478 serves as the catalytic Charge relay system.

It belongs to the peptidase S1 family. In terms of tissue distribution, predominantly detected in testis, liver, heart and ovary, as well as in several tumor cell lines.

The protein resides in the secreted. In vitro can degrade the fibrinogen alpha chain of as well as pro-urokinase-type plasminogen activator. The chain is Serine protease 53 (PRSS53) from Homo sapiens (Human).